Consider the following 216-residue polypeptide: MKKPYRKISDYAIVGGLSALVMVSIVGCKSNADDKPKEQSSLSQSVQKGAFVILEEQKDKSYKVVEEYPSSRTHIVVRDLQGNERVLSDEEIQKLIKEEEAKIDNGTSKLVQPNNGGGSNEGSGFGLGSAILGSAAGAILGSYIGNKLFNNPNYQQNAQRTYKSPQAYQRSQNSFSKSAPSASGMGTASKGQSGFFGSSRPTSSPAVSSGTRGFNA.

An N-terminal signal peptide occupies residues 1 to 27 (MKKPYRKISDYAIVGGLSALVMVSIVG). The N-palmitoyl cysteine moiety is linked to residue C28. C28 is lipidated: S-diacylglycerol cysteine. The segment covering 159 to 196 (QRTYKSPQAYQRSQNSFSKSAPSASGMGTASKGQSGFF) has biased composition (polar residues). A disordered region spans residues 159-216 (QRTYKSPQAYQRSQNSFSKSAPSASGMGTASKGQSGFFGSSRPTSSPAVSSGTRGFNA). The segment covering 198–209 (SSRPTSSPAVSS) has biased composition (low complexity).

It belongs to the UPF0323 family.

The protein resides in the cell membrane. The protein is UPF0323 lipoprotein HPAG1_0235 of Helicobacter pylori (strain HPAG1).